A 208-amino-acid polypeptide reads, in one-letter code: ATP phosphoribosyltransferase (208 aa).

It belongs to the ATP phosphoribosyltransferase family. Short subfamily. Heteromultimer composed of HisG and HisZ subunits.

It localises to the cytoplasm. It catalyses the reaction 1-(5-phospho-beta-D-ribosyl)-ATP + diphosphate = 5-phospho-alpha-D-ribose 1-diphosphate + ATP. Its pathway is amino-acid biosynthesis; L-histidine biosynthesis; L-histidine from 5-phospho-alpha-D-ribose 1-diphosphate: step 1/9. Functionally, catalyzes the condensation of ATP and 5-phosphoribose 1-diphosphate to form N'-(5'-phosphoribosyl)-ATP (PR-ATP). Has a crucial role in the pathway because the rate of histidine biosynthesis seems to be controlled primarily by regulation of HisG enzymatic activity. This Clostridioides difficile (strain 630) (Peptoclostridium difficile) protein is ATP phosphoribosyltransferase.